We begin with the raw amino-acid sequence, 61 residues long: uncharacterized protein (61 aa).

The stretch at 24-60 (WMRYESERDEKLRMLERMRDELEAELEEIKREIERLR) forms a coiled coil.

This is an uncharacterized protein from Archaeoglobus fulgidus (strain ATCC 49558 / DSM 4304 / JCM 9628 / NBRC 100126 / VC-16).